A 500-amino-acid chain; its full sequence is LEM protein 2 (500 aa).

Residues 1–45 form the LEM domain; it reads MVDVEKMSDAELRAELNVRGANVGPVTGTTRSLYEKKLKKLLSGG. Residues 1–325 are Nuclear-facing; it reads MVDVEKMSDA…VKQTNIFNEA (325 aa). The disordered stretch occupies residues 39 to 202; it reads KKLLSGGAKT…RRITSVPGLI (164 aa). Residues 46 to 57 show a composition bias toward low complexity; that stretch reads AKTPARPTVAKP. A compositionally biased stretch (pro residues) spans 58–75; sequence APKPTPKSAPAPKSPKSP. The segment covering 77–89 has biased composition (low complexity); that stretch reads ARRSIPRAAATAA. A compositionally biased stretch (acidic residues) spans 103–122; the sequence is EEMSDSDDDMRDDDDDDEEI. Low complexity-rich tracts occupy residues 130-141 and 168-197; these read SSFRSANSTASS and NTPR…RITS. The chain crosses the membrane as a helical span at residues 326 to 346; the sequence is IYFALYVILILFVVLGIAYAL. Residues 347-378 are Perinuclear space-facing; it reads TTTHRPKTADFSGYWGVLKAAGRDSLNFFYNY. A helical membrane pass occupies residues 379 to 399; that stretch reads AILPVVSLGIFVVLGAGIYFG. At 400 to 500 the chain is on the nuclear side; the sequence is HRKYKEAKEQ…WIGNQSQKRW (101 aa).

Interacts with lmn-1. Interacts (via LEM domain and the C-terminal nuclear domain) with baf-1. As to expression, ubiquitous. High expression in germline and intestine.

It localises to the nucleus inner membrane. Its subcellular location is the nucleus envelope. It is found in the chromosome. Functionally, nuclear lamina-associated inner nuclear membrane protein that is involved in cell division, nuclear structure organization, maintenance of nuclear envelope integrity and nuclear envelope reformation after mitosis. In interphase cells, plays a role in anchoring and spatial arrangement of chromosome arms at the nuclear periphery, forming so-called lem-2 subdomains. Both arms of autosomes but only the left arm of the X chromosome are anchored in lem-2 subdomains; sequences bound by lem-2 are mainly repetitive chromosome sequences and inactive genes. Involved in chromosome segregation and cell division, probably via its interaction with the nuclear intermediate filament protein lmn-1, the main component of nuclear lamina. Required to organize the distribution of lmn-1, nuclear pore complexes (NPCs) and chromatin in mitotically active cells. Involved in the nuclear positioning and efficient anchoring of microtubule-organizing centers (MTOCs) to the nuclear envelope during mitosis as well as on maintaining correct nuclear morphology. Contributes to closure of nuclear envelope (NE) holes and prevents excess nuclear membranes after meiosis and mitosis. Together with emr-1, plays a role in baf-1 enrichment at the nuclear envelope in anaphase. Together with emr-1, involved in muscle cell attachment to hypodermal cells, as well as muscle cell location and sarcomere organization. May play a role in radiation-induced DNA damage repair response. The sequence is that of LEM protein 2 (lem-2) from Caenorhabditis elegans.